The sequence spans 378 residues: 3-dehydroquinate synthase (378 aa).

NAD(+)-binding positions include 111–115 (GVIGD), 135–136 (TS), Lys148, and Lys157. Zn(2+) is bound by residues Glu190, His252, and His271.

The protein belongs to the sugar phosphate cyclases superfamily. Dehydroquinate synthase family. It depends on NAD(+) as a cofactor. Co(2+) is required as a cofactor. The cofactor is Zn(2+).

The protein resides in the cytoplasm. It catalyses the reaction 7-phospho-2-dehydro-3-deoxy-D-arabino-heptonate = 3-dehydroquinate + phosphate. Its pathway is metabolic intermediate biosynthesis; chorismate biosynthesis; chorismate from D-erythrose 4-phosphate and phosphoenolpyruvate: step 2/7. Functionally, catalyzes the conversion of 3-deoxy-D-arabino-heptulosonate 7-phosphate (DAHP) to dehydroquinate (DHQ). In Mesorhizobium japonicum (strain LMG 29417 / CECT 9101 / MAFF 303099) (Mesorhizobium loti (strain MAFF 303099)), this protein is 3-dehydroquinate synthase.